Here is a 563-residue protein sequence, read N- to C-terminus: Protein NRT1/ PTR FAMILY 5.9 (563 aa).

The chain crosses the membrane as a helical span at residues 56–76; it reads TWAGFTSMLPLFSAPLADTYW. Phosphothreonine is present on Thr81. The next 10 helical transmembrane spans lie at 82–102, 110–130, 168–188, 194–214, 317–337, 362–382, 394–414, 441–461, 479–499, and 528–548; these read ILASSSVYFVGLVGLTWTAFA, TISSYFLYSSLCLVSIGLGVL, FFQLWYFGVCTGSLMGVTVMA, FGWVLGFAIPGIVIFLSILVF, FPIWMMLLMFAVIFQLPATFF, TITLSIILLMPLYDKILIPIT, VMERMGVGMFLSIIAIVIAAI, IFWLLPQYILLGISDIFTVVG, FALYTSVFGVGSFVSAALISI, and WLLALTSTISFVVYIFLCKFF.

This sequence belongs to the major facilitator superfamily. Proton-dependent oligopeptide transporter (POT/PTR) (TC 2.A.17) family. As to expression, expressed in roots and flowers.

It localises to the membrane. The chain is Protein NRT1/ PTR FAMILY 5.9 (NPF5.9) from Arabidopsis thaliana (Mouse-ear cress).